The primary structure comprises 299 residues: Taste receptor type 2 member 1 (299 aa).

Residues 1-9 (MLESHLIIY) are Extracellular-facing. A helical membrane pass occupies residues 10–30 (FLLAVIQFLLGIFTNGIIVVV). Over 31–55 (NGIDLIKHRKMAPLDLLLSCLAVSR) the chain is Cytoplasmic. The chain crosses the membrane as a helical span at residues 56-76 (IFLQLFIFYVNVIVIFFIEFI). At 77–81 (MCSAN) the chain is on the extracellular side. Residues 82–102 (CAILLFINELELWLATWLGVF) traverse the membrane as a helical segment. Residues 103–124 (YCAKVASVRHPLFXWLKMRISK) lie on the Cytoplasmic side of the membrane. The chain crosses the membrane as a helical span at residues 125–145 (LVPWMILGSLLYVSMICVFHS). The Extracellular portion of the chain corresponds to 146–178 (KYAGFMVPYFLRNFFSQNTTIQKEDTLAIQIFS). Asn163 carries an N-linked (GlcNAc...) asparagine glycan. A helical transmembrane segment spans residues 179–199 (FVAEFSVPLLIFLVAVLLLIF). At 200-222 (SLGRHTRQMRNTVAGSRVPGRGA) the chain is on the cytoplasmic side. A helical membrane pass occupies residues 223–243 (PISALLSILSFLILYFSHCMI). The Extracellular portion of the chain corresponds to 244–257 (KVFLSSLKFHIRRF). The helical transmembrane segment at 258-278 (IFLFFILVIGIYPSGHSLILI) threads the bilayer. The Cytoplasmic segment spans residues 279–299 (LGNPKLKQNAKKFLLHSKCCQ).

Belongs to the G-protein coupled receptor T2R family.

The protein localises to the membrane. In terms of biological role, receptor that may play a role in the perception of bitterness and is gustducin-linked. May play a role in sensing the chemical composition of the gastrointestinal content. The activity of this receptor may stimulate alpha gustducin, mediate PLC-beta-2 activation and lead to the gating of TRPM5. The chain is Taste receptor type 2 member 1 (TAS2R1) from Gorilla gorilla gorilla (Western lowland gorilla).